A 28-amino-acid chain; its full sequence is Omega-conotoxin-like CnVIIH (28 aa).

3 cysteine pairs are disulfide-bonded: C1/C16, C8/C20, and C15/C27. P7 is subject to 4-hydroxyproline; partial. M12 bears the Methionine sulfoxide mark. At C27 the chain carries Cysteine amide.

It belongs to the conotoxin O1 superfamily. Expressed by the venom duct.

It localises to the secreted. Functionally, omega-conotoxins act at presynaptic membranes, they bind and block voltage-gated calcium channels (Cav). This toxin blocks N-type calcium channels (Cav2.2/CACNA1B) with high potency. Unexpectedly, it does not show any blocking activity at amphibian neuromuscular junction. In vivo, when intracerebroventricularly injected into mice causes shaking activity, and, at higher doses, causes mild tremors. When injected intramuscularly into fish, it causes paralysis, and, at higher doses, causes death. The chain is Omega-conotoxin-like CnVIIH from Conus consors (Singed cone).